The chain runs to 107 residues: Urease subunit beta (107 aa).

This sequence belongs to the urease beta subunit family. Heterotrimer of UreA (gamma), UreB (beta) and UreC (alpha) subunits. Three heterotrimers associate to form the active enzyme.

The protein localises to the cytoplasm. It catalyses the reaction urea + 2 H2O + H(+) = hydrogencarbonate + 2 NH4(+). The protein operates within nitrogen metabolism; urea degradation; CO(2) and NH(3) from urea (urease route): step 1/1. The chain is Urease subunit beta from Bacillus sp. (strain TB-90).